The chain runs to 551 residues: MNADGRTRLHQTPEWAALVKHREQLGEVRLREMFAADPGRGTGWTLRVGDLHVDYSKHLVTDETLALLQELAAATGVSGLRDAMFRGERINITEDRAVLHTALRAPRDAVIEVDGENVVPQVHAVLDKMAGFADRVRTGEWTGHTGRRIRNVVNIGIGGSDLGPAMAYEALRAFTDRSLTLRFVSNVDGADLHEAVRDLDPAETLFIIASKTFTTIETITNATSARSWLLAGLGGDEKAVAKHFVALSTNAEKVADFGIDTANMFEFWDWVGGRYSFDSAIGLSLMIAIGPDRFREMLDGFHLVDEHFRTAPAESNVPLLMGLLGVWYGSFLGAQSHAVLPYSHYLSKFTAYLQQLDMESNGKSVDREGKPVQWQTGPVVWGTPGTNGQHAYYQLIHQGTKLIPADFIGFARPVDELSEELKSQHDLLMANFFAQTQALAFGKTPDEVRAEGVPEELVPHKTFPGDHPTTTILARELTPSVLGQLVALYEHKVFVQGAIWNIDSFDQWGVELGKVLAKRVEPALTEGADVPGLDPSTGALVAAYRELRGRR.

Residue Glu359 is the Proton donor of the active site. Residues His390 and Lys514 contribute to the active site.

It belongs to the GPI family.

Its subcellular location is the cytoplasm. The enzyme catalyses alpha-D-glucose 6-phosphate = beta-D-fructose 6-phosphate. Its pathway is carbohydrate biosynthesis; gluconeogenesis. The protein operates within carbohydrate degradation; glycolysis; D-glyceraldehyde 3-phosphate and glycerone phosphate from D-glucose: step 2/4. Functionally, catalyzes the reversible isomerization of glucose-6-phosphate to fructose-6-phosphate. This Streptomyces coelicolor (strain ATCC BAA-471 / A3(2) / M145) protein is Glucose-6-phosphate isomerase 2.